Here is a 133-residue protein sequence, read N- to C-terminus: Fluoride-specific ion channel FluC (133 aa).

The next 4 helical transmembrane spans lie at 12–32 (LAMT…ASLI), 41–61 (WGTL…LVWL), 76–96 (IVGV…CLVF), and 104–124 (MIGI…FAGA). Residues Gly81 and Thr84 each contribute to the Na(+) site.

This sequence belongs to the fluoride channel Fluc/FEX (TC 1.A.43) family.

It localises to the cell inner membrane. The enzyme catalyses fluoride(in) = fluoride(out). Na(+) is not transported, but it plays an essential structural role and its presence is essential for fluoride channel function. Its function is as follows. Fluoride-specific ion channel. Important for reducing fluoride concentration in the cell, thus reducing its toxicity. The protein is Fluoride-specific ion channel FluC of Xanthomonas axonopodis pv. citri (strain 306).